Consider the following 423-residue polypeptide: uncharacterized protein (423 aa).

A signal peptide spans 1-16; it reads MKSRIFFITLLTIVAA. The Extracellular portion of the chain corresponds to 17–402; it reads QESADQLCSS…SSSAKEEQTS (386 aa). Disulfide bonds link cysteine 24-cysteine 217, cysteine 33-cysteine 43, cysteine 36-cysteine 68, cysteine 46-cysteine 57, cysteine 219-cysteine 238, cysteine 230-cysteine 241, cysteine 243-cysteine 252, cysteine 254-cysteine 288, cysteine 271-cysteine 286, cysteine 280-cysteine 291, cysteine 293-cysteine 303, cysteine 305-cysteine 327, cysteine 310-cysteine 325, cysteine 319-cysteine 330, cysteine 332-cysteine 341, and cysteine 343-cysteine 350. N-linked (GlcNAc...) asparagine glycosylation occurs at asparagine 65. The interval 215-350 is cysteine-rich tandem repeats; it reads CGCECEKHPE…CSCSTASNNC (136 aa). I-EGF domains follow at residues 219 to 253, 254 to 304, and 305 to 342; these read CEKH…DKCE, CPLA…KFCQ, and CDND…DDCS. Asparagine 274 carries an N-linked (GlcNAc...) asparagine glycan. Asparagine 307 carries N-linked (GlcNAc...) asparagine glycosylation. The tract at residues 354 to 406 is disordered; that stretch reads GTPAPEEKDKPESVPEEPEATEKPDDMPSDSDLEKELDESSSAKEEQTSSSGV. The segment covering 380-392 has biased composition (acidic residues); it reads MPSDSDLEKELDE. Residues 403-421 traverse the membrane as a helical segment; that stretch reads SSGVVSRVCVLLTFFLLVL. Over 422 to 423 the chain is Cytoplasmic; that stretch reads NF.

The protein belongs to the integrin beta chain family.

It is found in the membrane. This is an uncharacterized protein from Caenorhabditis elegans.